Reading from the N-terminus, the 150-residue chain is Dual specificity protein phosphatase 23 (150 aa).

In terms of domain architecture, Tyrosine-protein phosphatase spans 7 to 150 (NFSWVLPGRL…AVFQFYQRTK (144 aa)). Residue cysteine 95 is the Phosphocysteine intermediate of the active site.

This sequence belongs to the protein-tyrosine phosphatase family. Non-receptor class dual specificity subfamily. In terms of tissue distribution, widely expressed.

It localises to the cytoplasm. It is found in the cytosol. The protein resides in the nucleus. The enzyme catalyses O-phospho-L-tyrosyl-[protein] + H2O = L-tyrosyl-[protein] + phosphate. It carries out the reaction O-phospho-L-seryl-[protein] + H2O = L-seryl-[protein] + phosphate. It catalyses the reaction O-phospho-L-threonyl-[protein] + H2O = L-threonyl-[protein] + phosphate. Protein phosphatase that mediates dephosphorylation of proteins phosphorylated on Tyr and Ser/Thr residues. In vitro, it can dephosphorylate p44-ERK1 (MAPK3) but not p54 SAPK-beta (MAPK10) in vitro. Able to enhance activation of JNK and p38 (MAPK14). This chain is Dual specificity protein phosphatase 23 (Dusp23), found in Mus musculus (Mouse).